The primary structure comprises 236 residues: UPF0502 protein Bcen2424_5610 (236 aa).

Belongs to the UPF0502 family.

The polypeptide is UPF0502 protein Bcen2424_5610 (Burkholderia cenocepacia (strain HI2424)).